The following is a 432-amino-acid chain: 3-phosphoshikimate 1-carboxyvinyltransferase (432 aa).

Positions 23, 24, and 28 each coordinate 3-phosphoshikimate. A phosphoenolpyruvate-binding site is contributed by K23. Phosphoenolpyruvate-binding residues include G95 and R123. 3-phosphoshikimate-binding residues include S167, Q169, D317, and K344. Residue Q169 participates in phosphoenolpyruvate binding. Catalysis depends on D317, which acts as the Proton acceptor. Residues R348 and R390 each coordinate phosphoenolpyruvate.

Belongs to the EPSP synthase family. Monomer.

The protein localises to the cytoplasm. It carries out the reaction 3-phosphoshikimate + phosphoenolpyruvate = 5-O-(1-carboxyvinyl)-3-phosphoshikimate + phosphate. It participates in metabolic intermediate biosynthesis; chorismate biosynthesis; chorismate from D-erythrose 4-phosphate and phosphoenolpyruvate: step 6/7. Its function is as follows. Catalyzes the transfer of the enolpyruvyl moiety of phosphoenolpyruvate (PEP) to the 5-hydroxyl of shikimate-3-phosphate (S3P) to produce enolpyruvyl shikimate-3-phosphate and inorganic phosphate. The polypeptide is 3-phosphoshikimate 1-carboxyvinyltransferase (Staphylococcus saprophyticus subsp. saprophyticus (strain ATCC 15305 / DSM 20229 / NCIMB 8711 / NCTC 7292 / S-41)).